We begin with the raw amino-acid sequence, 710 residues long: MARITPVSQYRNIGISAHIDAGKTTTTERILFYTGINHKIGEVHDGAATMDWMEQEQERGITITSAATTTFWSGMSKQFLPHRINIIDTPGHVDFTIEVERSMRVLDGAVMIYCAVGGVQPQSETVWRQVNKYNVPRIAFINKMDRMGANFFNVVKQMNERLGIDPVPIQIPINSEENFSGVIDLIRMKAIYWDDLDKGITFKYDNIPSDLTVLSDRWRQKLIESAVENDDFLMDKYLTGKKLSEYEIKNSLRQRVLNNEIVLITCGSAFKNKGVQALLDAIVEYLPSPMDVASYNVKKISQKSNSKKSCSSNMDLSNDQEAFVALAFKIATDPFVGNLTFFRVYSGKVSSGDVIYNSVKKKKERFGRIVQMHANKREEIKEVRAGDIAAAIGLKSVTTGDTLCDPNNVVVLEKMDFPDPVISIAVEPKTKIDQEKMSVALNRLAKEDPSFKVHTDRESNQTIISGMGELHLEIIVDRMRREFGVGANIGQPQVSYRETIQSSVKNVEGKYIKQSGGRGQYGHVVIDLFPLKPLNQSGYIFINDIKGGIIPGEYISAIDKGIQEQLLYGPLAGYSVVDIGVRLHFGSYHDVDSSEIAFKLAASLAFKSAFKKANPVLLEPIMKVEVETPEEYMGDVIGDLNRRRGMIEGMIDLSIGKSIRAQVPLSCMFGYATDVRSQTQGRASYSMEFLKYSEAPVHVASSIIQNRDKN.

The 283-residue stretch at 8-290 (SQYRNIGISA…AIVEYLPSPM (283 aa)) folds into the tr-type G domain. GTP contacts are provided by residues 17–24 (AHIDAGKT), 88–92 (DTPGH), and 142–145 (NKMD).

The protein belongs to the TRAFAC class translation factor GTPase superfamily. Classic translation factor GTPase family. EF-G/EF-2 subfamily.

The protein resides in the cytoplasm. Functionally, catalyzes the GTP-dependent ribosomal translocation step during translation elongation. During this step, the ribosome changes from the pre-translocational (PRE) to the post-translocational (POST) state as the newly formed A-site-bound peptidyl-tRNA and P-site-bound deacylated tRNA move to the P and E sites, respectively. Catalyzes the coordinated movement of the two tRNA molecules, the mRNA and conformational changes in the ribosome. In Buchnera aphidicola subsp. Baizongia pistaciae (strain Bp), this protein is Elongation factor G.